Consider the following 329-residue polypeptide: HTH-type transcriptional regulator ArgR (329 aa).

Residues 214-312 enclose the HTH araC/xylS-type domain; the sequence is TQAVLLMEAN…GVTPREDRNQ (99 aa). DNA-binding regions (H-T-H motif) lie at residues 231 to 252 and 279 to 302; these read DEIA…KQYL and IIQI…RNFF. A disordered region spans residues 307–329; sequence REDRNQRRGGSAFETTFTPVERG. The segment covering 319-329 has biased composition (polar residues); the sequence is FETTFTPVERG.

In terms of biological role, argR could be a transcriptional activator of the dauBAR operon in response to the presence of L-Arg. The polypeptide is HTH-type transcriptional regulator ArgR (argR) (Pseudomonas aeruginosa (strain ATCC 15692 / DSM 22644 / CIP 104116 / JCM 14847 / LMG 12228 / 1C / PRS 101 / PAO1)).